The chain runs to 322 residues: Ferrochelatase (322 aa).

Positions 194 and 275 each coordinate Fe cation.

It belongs to the ferrochelatase family.

It is found in the cytoplasm. The enzyme catalyses heme b + 2 H(+) = protoporphyrin IX + Fe(2+). The protein operates within porphyrin-containing compound metabolism; protoheme biosynthesis; protoheme from protoporphyrin-IX: step 1/1. Catalyzes the ferrous insertion into protoporphyrin IX. The protein is Ferrochelatase of Proteus mirabilis (strain HI4320).